The sequence spans 111 residues: Large ribosomal subunit protein uL22 (111 aa).

This sequence belongs to the universal ribosomal protein uL22 family. As to quaternary structure, part of the 50S ribosomal subunit.

Functionally, this protein binds specifically to 23S rRNA; its binding is stimulated by other ribosomal proteins, e.g. L4, L17, and L20. It is important during the early stages of 50S assembly. It makes multiple contacts with different domains of the 23S rRNA in the assembled 50S subunit and ribosome. Its function is as follows. The globular domain of the protein is located near the polypeptide exit tunnel on the outside of the subunit, while an extended beta-hairpin is found that lines the wall of the exit tunnel in the center of the 70S ribosome. The chain is Large ribosomal subunit protein uL22 from Clostridium perfringens (strain ATCC 13124 / DSM 756 / JCM 1290 / NCIMB 6125 / NCTC 8237 / Type A).